The chain runs to 473 residues: Photosystem II CP43 reaction center protein (473 aa).

The propeptide occupies 1 to 14 (MKTLYSPRRFYPVE). Thr15 is subject to N-acetylthreonine. Thr15 is modified (phosphothreonine). 5 helical membrane passes run 69 to 93 (LFEVAHFIPEKPMYEQGLILLPHLA), 134 to 155 (LIGPETLEESFPFFGYAWKDRN), 178 to 200 (KALFFGGIYDTWAPGGGDVRKIT), 255 to 275 (KPFAWTRRAFVWSGEAYLSYS), and 291 to 312 (WFNNTAYPSEFYGPTGPEASQA). Glu367 provides a ligand contact to [CaMn4O5] cluster. The chain crosses the membrane as a helical span at residues 447-471 (RARAAAAGFEKGIDRDLEPVLFMTP).

It belongs to the PsbB/PsbC family. PsbC subfamily. In terms of assembly, PSII is composed of 1 copy each of membrane proteins PsbA, PsbB, PsbC, PsbD, PsbE, PsbF, PsbH, PsbI, PsbJ, PsbK, PsbL, PsbM, PsbT, PsbX, PsbY, PsbZ, Psb30/Ycf12, at least 3 peripheral proteins of the oxygen-evolving complex and a large number of cofactors. It forms dimeric complexes. The cofactor is Binds multiple chlorophylls and provides some of the ligands for the Ca-4Mn-5O cluster of the oxygen-evolving complex. It may also provide a ligand for a Cl- that is required for oxygen evolution. PSII binds additional chlorophylls, carotenoids and specific lipids..

The protein localises to the plastid. It localises to the chloroplast thylakoid membrane. In terms of biological role, one of the components of the core complex of photosystem II (PSII). It binds chlorophyll and helps catalyze the primary light-induced photochemical processes of PSII. PSII is a light-driven water:plastoquinone oxidoreductase, using light energy to abstract electrons from H(2)O, generating O(2) and a proton gradient subsequently used for ATP formation. This is Photosystem II CP43 reaction center protein from Welwitschia mirabilis (Tree tumbo).